We begin with the raw amino-acid sequence, 987 residues long: Kinesin-like protein KIN-14G (987 aa).

The region spanning 44-163 (SLRRYEAAGW…CILALKSYSE (120 aa)) is the Calponin-homology (CH) domain. The segment at 201–221 (ISRTQSTDMLSTDQPLSSDGD) is disordered. In terms of domain architecture, Kinesin motor spans 394–721 (NIRVYCRVRP…LKFAERVGSV (328 aa)). 478–485 (GQTGSGKT) contacts ATP. Positions 725 to 754 (AARVNKDNSEVKELKEQIANLKMALVRKGN) form a coiled coil. 2 disordered regions span residues 759 to 849 (QPTA…ESKS) and 927 to 987 (NIQN…SLGT). Residues 788–797 (MGNTSNNSRP) are compositionally biased toward polar residues. Basic and acidic residues predominate over residues 840–849 (GKDEDRESKS). Residues 964-974 (PPNTVNSQPQR) are compositionally biased toward polar residues.

Belongs to the TRAFAC class myosin-kinesin ATPase superfamily. Kinesin family. KIN-14 subfamily. Monomer. In terms of tissue distribution, flower specific.

The protein localises to the cytoplasm. It localises to the cytoskeleton. Microtubule-binding motor protein. This is Kinesin-like protein KIN-14G from Arabidopsis thaliana (Mouse-ear cress).